We begin with the raw amino-acid sequence, 145 residues long: Immune protein Tsi3 (145 aa).

An N-terminal signal peptide occupies residues 1–15 (MKTVALILASLALLA). C16 carries the N-palmitoyl cysteine lipid modification. C16 carries the S-diacylglycerol cysteine lipid modification. Residues 53-85 (FDEGGKLRNPRQLEVQRQDAPPPPDLASRRLGD) form a disordered region. E126 is a binding site for Ca(2+).

In terms of assembly, forms a heterotetramer with Tse3 consisting of two Tse3 dimers and two Tsi3 dimers. Formation of the complex inactivates Tse3 enzymatic activity.

In terms of biological role, immunity protein that plays a role in preventing early activation of toxin Tse3. Occupies Tse3 substrate binding site and prevents the substrate from entering. In Pseudomonas aeruginosa (strain ATCC 15692 / DSM 22644 / CIP 104116 / JCM 14847 / LMG 12228 / 1C / PRS 101 / PAO1), this protein is Immune protein Tsi3.